We begin with the raw amino-acid sequence, 182 residues long: Peptide methionine sulfoxide reductase MsrA (182 aa).

The active site involves C13.

Belongs to the MsrA Met sulfoxide reductase family.

It catalyses the reaction L-methionyl-[protein] + [thioredoxin]-disulfide + H2O = L-methionyl-(S)-S-oxide-[protein] + [thioredoxin]-dithiol. The enzyme catalyses [thioredoxin]-disulfide + L-methionine + H2O = L-methionine (S)-S-oxide + [thioredoxin]-dithiol. Functionally, has an important function as a repair enzyme for proteins that have been inactivated by oxidation. Catalyzes the reversible oxidation-reduction of methionine sulfoxide in proteins to methionine. The polypeptide is Peptide methionine sulfoxide reductase MsrA (Mycobacterium bovis (strain ATCC BAA-935 / AF2122/97)).